The primary structure comprises 131 residues: uncharacterized protein (131 aa).

This is an uncharacterized protein from Saccharomyces cerevisiae (strain ATCC 204508 / S288c) (Baker's yeast).